Consider the following 358-residue polypeptide: Probable tartrate dehydrogenase/decarboxylase TtuC' (358 aa).

Residues Asp222, Asp246, and Asp250 each coordinate Mn(2+).

The protein belongs to the isocitrate and isopropylmalate dehydrogenases family. Requires Mg(2+) as cofactor. Mn(2+) serves as cofactor. K(+) is required as a cofactor.

The protein localises to the cytoplasm. The catalysed reaction is tartrate + NAD(+) = 2-hydroxy-3-oxosuccinate + NADH + H(+). It carries out the reaction (2R,3S)-tartrate + NAD(+) = 2-hydroxy-3-oxosuccinate + NADH + H(+). It catalyses the reaction (2R,3R)-tartrate + NAD(+) = 2-hydroxy-3-oxosuccinate + NADH + H(+). The enzyme catalyses (2R,3R)-tartrate + H(+) = (R)-glycerate + CO2. The catalysed reaction is (R)-malate + NAD(+) = pyruvate + CO2 + NADH. The protein operates within carbohydrate acid metabolism; tartrate degradation; 2-hydroxy-3-oxosuccinate from L-tartrate: step 1/1. It functions in the pathway carbohydrate acid metabolism; tartrate degradation; 2-hydroxy-3-oxosuccinate from meso-tartrate: step 1/1. Its pathway is carbohydrate acid metabolism; tartrate degradation; D-glycerate from L-tartrate: step 1/1. Has multiple catalytic activities. Apart from catalyzing the oxidation of (+)-tartrate to oxaloglycolate, also converts meso-tartrate to D-glycerate and catalyzes the oxidative decarboxylation of D-malate to pyruvate. This chain is Probable tartrate dehydrogenase/decarboxylase TtuC' (ttuC'), found in Agrobacterium vitis (Rhizobium vitis).